A 396-amino-acid chain; its full sequence is MTGFFTILSFSLAALSVTNAAQILSVPKGAEVVPNGYIVVMKDDTSQQDFSSHRVWISSIHHNMTRRGLDGAGVKQTYDFDHLRGYSGIFDEDTIKDISNDPKVAFVEPDAIISQHVVVQQRKAPWGLSRLSNRRGGRNYVFDSSAGSGVWAYVVDSGVDVRHAEFQGRAVWGSNLVDNKNSDGTGHGTHVAGTIAGKTYGIAKKAKVVAVKVLNSEGKGPTSGIIAGINWSIRHARKHGMLQKSVLNMSLGGTYSAGLNHATAQAIKAGMFVSVSAGNDNINSNGNSPASERSVCTIAASTENDGKASFSNWGPAVDLYAPGHNILSARPGGGSQTMSGTSMAAPHAAGVAAYLIAKEGIPGNRACLRLKQLSQPTIRNPGPDTTSRLLYNGSGR.

The first 20 residues, 1-20, serve as a signal peptide directing secretion; that stretch reads MTGFFTILSFSLAALSVTNA. Residues 21–116 constitute a propeptide that is removed on maturation; sequence AQILSVPKGA…VEPDAIISQH (96 aa). Positions 37–113 constitute an Inhibitor I9 domain; that stretch reads YIVVMKDDTS…VAFVEPDAII (77 aa). Asn-63 is a glycosylation site (N-linked (GlcNAc...) asparagine). A Peptidase S8 domain is found at 125 to 396; sequence PWGLSRLSNR…SRLLYNGSGR (272 aa). Active-site charge relay system residues include Asp-156 and His-187. N-linked (GlcNAc...) asparagine glycans are attached at residues Asn-230 and Asn-248. Ser-342 acts as the Charge relay system in catalysis. The segment covering 376–389 has biased composition (polar residues); it reads PTIRNPGPDTTSRL. A disordered region spans residues 376–396; that stretch reads PTIRNPGPDTTSRLLYNGSGR. Asn-392 carries an N-linked (GlcNAc...) asparagine glycan.

This sequence belongs to the peptidase S8 family.

Its subcellular location is the secreted. Functionally, secreted subtilisin-like serine protease with keratinolytic activity that contributes to pathogenicity. The polypeptide is Subtilisin-like protease 5 (SUB5) (Trichophyton verrucosum (Cattle ringworm fungus)).